The following is a 1331-amino-acid chain: Lysine-specific demethylase 3A-A (1331 aa).

3 disordered regions span residues 243 to 280, 358 to 381, and 497 to 532; these read LNDKSRKPRAPKRKSQDTESEDQTELKQTRNEEVPSKD, TPPQANSPPSFGAATPQGKGTQNL, and KVVKKPENNHTSVRAIKPQEPPYPKSPNKNDGVTYP. Residues 266–280 are compositionally biased toward basic and acidic residues; sequence TELKQTRNEEVPSKD. The segment at 683–708 adopts a C6-type zinc-finger fold; that stretch reads CDACDTTIFNLHWVCPKCGFGVCVDC. The LXXLL motif signature appears at 894–898; that stretch reads LRNLL. The 206-residue stretch at 1086–1291 folds into the JmjC domain; it reads RREGKLNLAA…HCFWLTQEFR (206 aa). Residues H1130, D1132, and H1259 each contribute to the Fe cation site.

This sequence belongs to the JHDM2 histone demethylase family. It depends on Fe(2+) as a cofactor.

The protein resides in the cytoplasm. It localises to the nucleus. It carries out the reaction N(6),N(6)-dimethyl-L-lysyl(9)-[histone H3] + 2 2-oxoglutarate + 2 O2 = L-lysyl(9)-[histone H3] + 2 formaldehyde + 2 succinate + 2 CO2. Functionally, histone demethylase that specifically demethylates 'Lys-9' of histone H3, thereby playing a central role in histone code. Preferentially demethylates mono- and dimethylated H3 'Lys-9' residue, with a preference for dimethylated residue, while it has weak or no activity on trimethylated H3 'Lys-9'. Demethylation of Lys residue generates formaldehyde and succinate. The protein is Lysine-specific demethylase 3A-A (kdm3a-a) of Xenopus laevis (African clawed frog).